Consider the following 212-residue polypeptide: Ribonuclease HII (212 aa).

Residues 12–201 (ELVAGVDEVG…VRAMLEQVSI (190 aa)) form the RNase H type-2 domain. Residues Asp-18, Glu-19, and Asp-110 each coordinate a divalent metal cation.

Belongs to the RNase HII family. Mn(2+) serves as cofactor. Requires Mg(2+) as cofactor.

The protein resides in the cytoplasm. It carries out the reaction Endonucleolytic cleavage to 5'-phosphomonoester.. Endonuclease that specifically degrades the RNA of RNA-DNA hybrids. This is Ribonuclease HII from Stutzerimonas stutzeri (strain A1501) (Pseudomonas stutzeri).